We begin with the raw amino-acid sequence, 245 residues long: MTSLPPSQCCIGGSLHEGETQGELTKFGDIPVYVSYPPDKSTHNAILFLSDIFGLALVNSKLIADLFAANGYLVVMPDLFQGDPVPVDHSPSFQIMDWLQGHLPPQTDPIVTATLREMRERLGCQRIGGVGYCYGGKYVVRYLHPGQLDVGFVAHPTFIEPDELKAIEGPLSISASAQDNLFPPEKRHESETILAQLDVPYQINIFSDVEHGFAVRCDLNKTRHRFAKEQSFSQGVTWFNQYLKK.

Active-site residues include Cys133, Asp179, and His211.

Belongs to the dienelactone hydrolase family.

The protein operates within secondary metabolite biosynthesis. Functionally, hydrolase; part of the gene cluster that mediates the biosynthesis of pyranoviolin A, a pyranonigrin analog with a C-3 methoxy group. Initially, the PKS portion of pyvA synthesizes C-10 carbon chain from 5 molecules of malonyl-CoA, which is then condensed with the thiolation (T) domain-bound glycine activated by the adenylation (A) domain. The subsequent chain release by Dieckmann condensation (DKC) could be catalyzed by the TE domain present at the C-terminus of pyvA and/or the alpha/beta hydrolase pyvD, installing the tetramic acid moiety. The FAD-dependent monooxygenase pyvC next epoxidizes one of the olefins of the polyketide part, and the epoxide ring-opening induces the dihydro-gamma-pyrone ring formation. The cytochrome P450 monooxygeanse pyvB would be responsible for the 2 consecutive reactions, in which the dihydro-gamma-pyrone is oxidized to gamma-pyrone and C-7 is hydroxylated to yield pyranonigrin F. Finally, the O-methyltransferase pyvH methylates the C-3 hydroxy group to complete the biosynthesis. The chain is Hydrolase pyvD from Aspergillus violaceofuscus (strain CBS 115571).